A 91-amino-acid chain; its full sequence is Lactococcin-B immunity protein (91 aa).

Functionally, imparts immunity to lactococcin-B to naturally sensitive host strains. The chain is Lactococcin-B immunity protein (lciB) from Lactococcus lactis subsp. cremoris (Streptococcus cremoris).